A 517-amino-acid polypeptide reads, in one-letter code: FAD-dependent monooxygenase FUP4 (517 aa).

The first 19 residues, Met1–Ala19, serve as a signal peptide directing secretion. The FAD-binding PCMH-type domain occupies Gln75–Gln246. The residue at position 112 (His112) is a Pros-8alpha-FAD histidine. N-linked (GlcNAc...) asparagine glycans are attached at residues Asn163, Asn208, and Asn346.

The protein belongs to the oxygen-dependent FAD-linked oxidoreductase family. It depends on FAD as a cofactor.

Its pathway is secondary metabolite biosynthesis; terpenoid biosynthesis. Functionally, FAD-dependent monooxygenase; part of the gene cluster that mediates the biosynthesis of the mycotoxin fusaproliferin (FUP) that belongs to the class of bicyclic sesterterpenoids. FUP4 catalyzes the oxidation of the hydroxy group at the C-16 position of preterpestacin III to a keto group, leading to the formation of (-)-terpestacin. The product of FUP1, preterpestacin I, might also serve as a substrate of FUP4 to yield oxo-preterpestacin I. The FUP biosynthetic pathway starts with the enzyme encoded by FUP1 that combines a C-terminal prenyltransferase domain responsible for the synthesis of geranylgeranyl diphosphate with the N-terminal terpene cyclase domain, to yield preterpestacin I. Preterpestacin I is then decorated by oxygenation steps that are catalyzed by two cytochrome P450 monooxygenases. First, FUP2 introduces a hydroxyl group at the C-24 position resulting in the formation of preterpestacin IIa. The second P450 monooxygenase catalyzes the hydroxylation at C-16 and C-17 of preterpestacin IIa, producing preterpestacin III. Subsequently, the FAD-dependent oxidoreductase FUP4 catalyzes the oxidation of the hydroxy group at the C-16 position to a keto group, leading to the formation of (-)-terpestacin, which is the immediate precursor of FUP. The final step in the proposed biosynthetic pathway is the addition of an acetyl group at the C-24 position of terpestacin, which is catalyzed by the acetyltransferase FUP5. The protein is FAD-dependent monooxygenase FUP4 of Fusarium proliferatum (strain ET1) (Orchid endophyte fungus).